The primary structure comprises 363 residues: Peptide chain release factor 1 (363 aa).

Gln-237 carries the post-translational modification N5-methylglutamine. Basic and acidic residues predominate over residues 284–296 (EDEKRRSAEESTR). The segment at 284–305 (EDEKRRSAEESTRRSLVASGDR) is disordered.

Belongs to the prokaryotic/mitochondrial release factor family. Methylated by PrmC. Methylation increases the termination efficiency of RF1.

It is found in the cytoplasm. Functionally, peptide chain release factor 1 directs the termination of translation in response to the peptide chain termination codons UAG and UAA. The protein is Peptide chain release factor 1 of Shewanella sp. (strain MR-4).